Reading from the N-terminus, the 437-residue chain is Eukaryotic peptide chain release factor subunit 1 (437 aa).

Ala-2 is subject to N-acetylalanine. Positions 61–64 (NIKS) match the NIKS motif; plays an important role in translational termination motif. Lys-63 bears the 4-hydroxylysine mark. Lys-87 participates in a covalent cross-link: Glycyl lysine isopeptide (Lys-Gly) (interchain with G-Cter in SUMO2). Gln-185 is modified (N5-methylglutamine). Position 347 is a phosphothreonine (Thr-347). Residue Lys-404 forms a Glycyl lysine isopeptide (Lys-Gly) (interchain with G-Cter in SUMO2) linkage.

It belongs to the eukaryotic release factor 1 family. In terms of assembly, component of the eRF1-eRF3-GTP ternary complex, composed of ETF1/ERF1 and eRF3 (GSPT1/ERF3A or GSPT2/ERF3B) and GTP. Component of the transient SURF (SMG1-UPF1-eRF1-eRF3) complex. Interacts with JMJD4. The ETF1-GSPT1 complex interacts with JMJD4. In terms of processing, hydroxylation at Lys-63 by JMJD4 promotes its translational termination efficiency. Post-translationally, methylated at Gln-185 by N6AMT1. Ubiquitinated via 'Lys-6'-linked polyubiquitin chains by RNF14 and RNF25 in response to ribosome collisions (ribosome stalling), leading to its degradation by the proteasome and rescue of stalled ribosomes.

It localises to the cytoplasm. In terms of biological role, component of the eRF1-eRF3-GTP ternary complex, a ternary complex that mediates translation termination in response to the termination codons. The eRF1-eRF3-GTP complex binds to a stop codon in the ribosomal A-site. ETF1/ERF1 is responsible for stop codon recognition and inducing hydrolysis of peptidyl-tRNA. Following GTP hydrolysis, eRF3 (GSPT1/ERF3A or GSPT2/ERF3B) dissociates, permitting ETF1/eRF1 to accommodate fully in the A-site, followed by hydrolysis of peptidyl-tRNA. Component of the transient SURF complex which recruits UPF1 to stalled ribosomes in the context of nonsense-mediated decay (NMD) of mRNAs containing premature stop codons. Required for SHFL-mediated translation termination which inhibits programmed ribosomal frameshifting (-1PRF) of mRNA from viruses and cellular genes. This chain is Eukaryotic peptide chain release factor subunit 1 (ETF1), found in Pongo abelii (Sumatran orangutan).